Reading from the N-terminus, the 153-residue chain is Ubiquitin/ISG15-conjugating enzyme E2 L6 (153 aa).

One can recognise a UBC core domain in the interval 2 to 149 (MASKRVAKEL…AEEFTLKFGV (148 aa)). Catalysis depends on cysteine 86, which acts as the Glycyl thioester intermediate.

This sequence belongs to the ubiquitin-conjugating enzyme family. As to quaternary structure, interacts with RNF19A, RNF19B and RNF144B. Interacts with FLT3 (tyrosine phosphorylated). Post-translationally, ISGylated.

The catalysed reaction is S-ubiquitinyl-[E1 ubiquitin-activating enzyme]-L-cysteine + [E2 ubiquitin-conjugating enzyme]-L-cysteine = [E1 ubiquitin-activating enzyme]-L-cysteine + S-ubiquitinyl-[E2 ubiquitin-conjugating enzyme]-L-cysteine.. Its pathway is protein modification; protein ubiquitination. Catalyzes the covalent attachment of ubiquitin or ISG15 to other proteins. Functions in the E6/E6-AP-induced ubiquitination of p53/TP53. Promotes ubiquitination and subsequent proteasomal degradation of FLT3. This is Ubiquitin/ISG15-conjugating enzyme E2 L6 (Ube2l6) from Mus musculus (Mouse).